A 203-amino-acid chain; its full sequence is Pyridoxal 5'-phosphate synthase subunit PdxT (203 aa).

52-54 (GES) serves as a coordination point for L-glutamine. Residue Cys-84 is the Nucleophile of the active site. L-glutamine is bound by residues Arg-116 and 144 to 145 (IR). Catalysis depends on charge relay system residues His-184 and Glu-186.

Belongs to the glutaminase PdxT/SNO family. In terms of assembly, in the presence of PdxS, forms a dodecamer of heterodimers. Only shows activity in the heterodimer.

The catalysed reaction is aldehydo-D-ribose 5-phosphate + D-glyceraldehyde 3-phosphate + L-glutamine = pyridoxal 5'-phosphate + L-glutamate + phosphate + 3 H2O + H(+). The enzyme catalyses L-glutamine + H2O = L-glutamate + NH4(+). The protein operates within cofactor biosynthesis; pyridoxal 5'-phosphate biosynthesis. Catalyzes the hydrolysis of glutamine to glutamate and ammonia as part of the biosynthesis of pyridoxal 5'-phosphate. The resulting ammonia molecule is channeled to the active site of PdxS. The sequence is that of Pyridoxal 5'-phosphate synthase subunit PdxT from Aeropyrum pernix (strain ATCC 700893 / DSM 11879 / JCM 9820 / NBRC 100138 / K1).